A 484-amino-acid chain; its full sequence is Arachin Ahy-3 (484 aa).

Positions M1–S20 are cleaved as a signal peptide. Cystine bridges form between C32–C65 and C108–C305. The region spanning Q35–R253 is the Cupin type-1 1 domain. The segment at Q208–F233 is disordered. Positions D295–N298 are excised as a propeptide. One can recognise a Cupin type-1 2 domain in the interval M311–R460. The propeptide occupies M479–A484.

Belongs to the 11S seed storage protein (globulins) family. In terms of assembly, hexamer; each subunit is composed of an acidic and a basic chain derived from a single precursor and linked by a disulfide bond.

This Arachis hypogaea (Peanut) protein is Arachin Ahy-3.